We begin with the raw amino-acid sequence, 351 residues long: Dihydroorotate dehydrogenase (quinone) (351 aa).

Residues 61 to 65 (AGLDK) and threonine 85 contribute to the FMN site. Position 65 (lysine 65) interacts with substrate. Residue 110–114 (NRMGF) coordinates substrate. Positions 139 and 172 each coordinate FMN. Asparagine 172 lines the substrate pocket. Serine 175 acts as the Nucleophile in catalysis. Residue asparagine 177 participates in substrate binding. Residues lysine 217 and threonine 245 each contribute to the FMN site. Position 246-247 (246-247 (NT)) interacts with substrate. FMN-binding positions include glycine 268, glycine 297, and 318-319 (YT).

Belongs to the dihydroorotate dehydrogenase family. Type 2 subfamily. In terms of assembly, monomer. Requires FMN as cofactor.

The protein localises to the cell membrane. The enzyme catalyses (S)-dihydroorotate + a quinone = orotate + a quinol. Its pathway is pyrimidine metabolism; UMP biosynthesis via de novo pathway; orotate from (S)-dihydroorotate (quinone route): step 1/1. Functionally, catalyzes the conversion of dihydroorotate to orotate with quinone as electron acceptor. This chain is Dihydroorotate dehydrogenase (quinone), found in Xylella fastidiosa (strain M23).